The sequence spans 302 residues: N-acetylmuramic acid 6-phosphate etherase (302 aa).

An SIS domain is found at 55-218 (AYPKFDQGGR…STGIMVKSGK (164 aa)). The active-site Proton donor is the Glu-83. The active site involves Glu-114.

This sequence belongs to the GCKR-like family. MurNAc-6-P etherase subfamily. In terms of assembly, homodimer.

The enzyme catalyses N-acetyl-D-muramate 6-phosphate + H2O = N-acetyl-D-glucosamine 6-phosphate + (R)-lactate. It participates in amino-sugar metabolism; N-acetylmuramate degradation. In terms of biological role, specifically catalyzes the cleavage of the D-lactyl ether substituent of MurNAc 6-phosphate, producing GlcNAc 6-phosphate and D-lactate. The sequence is that of N-acetylmuramic acid 6-phosphate etherase from Levilactobacillus brevis (strain ATCC 367 / BCRC 12310 / CIP 105137 / JCM 1170 / LMG 11437 / NCIMB 947 / NCTC 947) (Lactobacillus brevis).